Reading from the N-terminus, the 1142-residue chain is MAPCGRVRSRCPGPALLLLLALAARPALAGPPAAALQAGPGLNAAGQPAQGAAPGAAGPRGARGGGGGSGGGWKLSEEAVCREDVVRLCSKHSWANNLAVLECLQDVREPDNEISSDCNHLLWNYKLNLTTDPKFESVAREVCKSTIAEIKECADEPVGKGFLVSCLVDHRGNITEYQCHQYITKMTAIIFSDYRLICGFMDDCKADINLLKCGSIRPGEKDAHSQGEVVACLEKGLVKEAEENDPRVQVSDQCKKAILRVAELSSDDFHLDRHLYFACRDDRERFCENTQAGEGRVYKCLFNHKFEESMSEKCRDALTTRQKLIAQDYKVSYSLAKSCKSDLKKYRCNVENLPRSREARLSYLLMCLESAVHRGRQVSSECQGEMLDYRRMLMEDFSLSPEIILSCRGEIEHHCSGLHRKGRTLHCLMKVVRGEKGNVGLNCQQALQTLIQETDPGADYRIDRALNEACESVIQTACKHIRSGDPMILSCLMEHLYTEKMVEDCEHRLLELQYFISRDWKLDVVLYRKCQGDASRLCHTHGWNETSELMPPGAVFSCLYRHAYRTEEQGRRLSRECRAEVQRILHQRAMDVKLDPALQDKCMIDLGKWCSEKTETGQELECLQDHLDDLVSDCRDIVGNLTELESEDIQIEALLMRACEPIIQTFCHEVADNQIDSGDLMECLIQNKHQKEMNEKCAIGVTHFQLVQMKDFRFSYKFKMACKEDVLKLCPNIKKKVDVVICLSTTVRNDTLQDAKEHRVSLKCRKQLRVEELEMTEDIRLEPELYEACKSDIKNYCQNVPYGNAQIIECLKEIKKQLSTRCHQKVFKLQETEMMDPELDYTLMRVCKQMIKRFCPEADSKNMLQCLKQNKNSEVMDPKCKQMITKRQITQNTDYRLNPVLRKACKADIPKFCQNILNRAKDDTELEGQVISCLKLKYADQRLSPDCEDQIRVIIQESALDYRLDPQLQMHCSEEISSLCAEEAAAQEQTGQVEECLKVNLLKIKTEMCKKEVLNMLKESKADIFVDPVLHTACALDIKHHCAAIPPGRGRQMSCLMEALEDKRVRLQPECKKRLNDRIEMWSYAAKVAPAEGFSDLAMQVMTSPSKNYILSVITVGICVLFLIGLMCGRITKRVTRELKDR.

The signal sequence occupies residues 1-29; that stretch reads MAPCGRVRSRCPGPALLLLLALAARPALA. The Extracellular portion of the chain corresponds to 30-1108; it reads GPPAAALQAG…MQVMTSPSKN (1079 aa). The span at 45–60 shows a compositional bias: low complexity; sequence AGQPAQGAAPGAAGPR. Positions 45–69 are disordered; it reads AGQPAQGAAPGAAGPRGARGGGGGS. Cys-rich GLG1 repeat units follow at residues 81-112, 113-175, 178-241, 249-309, 310-376, 377-436, 438-500, 501-567, 572-631, 633-691, 692-751, 759-819, 821-874, 875-942, 943-998, and 1004-1064; these read CRED…EPDN, EISS…GNIT, QCHQ…VKEA, QVSD…FEES, MSEK…HRGR, QVSS…RGEK, NVGL…YTEK, MVED…YRTE, RLSR…DDLV, DCRD…KHQK, EMNE…RNDT, RVSL…KQLS, RCHQ…KNSE, VMDP…ADQR, LSPD…ECLK, and IKTE…EDKR. N-linked (GlcNAc...) asparagine glycans are attached at residues asparagine 128 and asparagine 173. A glycan (N-linked (GlcNAc...) asparagine) is linked at asparagine 544. N-linked (GlcNAc...) asparagine glycosylation is found at asparagine 640 and asparagine 749. The helical transmembrane segment at 1109–1129 threads the bilayer; that stretch reads YILSVITVGICVLFLIGLMCG. Topologically, residues 1130-1142 are cytoplasmic; the sequence is RITKRVTRELKDR.

Fucosylation is essential for binding to E-selectin. In terms of processing, N-glycosylated. Contains sialic acid residues.

It is found in the golgi apparatus membrane. Its subcellular location is the golgi outpost. The protein localises to the cytoplasm. The protein resides in the cytoskeleton. It localises to the microtubule organizing center. Binds fibroblast growth factor and E-selectin (cell-adhesion lectin on endothelial cells mediating the binding of neutrophils). Binds fibroblast growth factor (FGF). May be involved in intracellular FGF trafficking and the regulation of cellular responses to FGFS. The sequence is that of Golgi apparatus protein 1 (GLG1) from Gallus gallus (Chicken).